Reading from the N-terminus, the 262-residue chain is Type III pantothenate kinase (262 aa).

Residue 9–16 (DAGNSRIK) participates in ATP binding. Substrate is bound by residues Tyr-96 and 103 to 106 (GSDR). Asp-105 functions as the Proton acceptor in the catalytic mechanism. Thr-129 provides a ligand contact to ATP. Position 189 (Thr-189) interacts with substrate.

It belongs to the type III pantothenate kinase family. As to quaternary structure, homodimer. NH4(+) is required as a cofactor. Requires K(+) as cofactor.

It is found in the cytoplasm. The enzyme catalyses (R)-pantothenate + ATP = (R)-4'-phosphopantothenate + ADP + H(+). Its pathway is cofactor biosynthesis; coenzyme A biosynthesis; CoA from (R)-pantothenate: step 1/5. Catalyzes the phosphorylation of pantothenate (Pan), the first step in CoA biosynthesis. The protein is Type III pantothenate kinase of Burkholderia ambifaria (strain MC40-6).